A 123-amino-acid chain; its full sequence is 13 kDa major membrane protein (123 aa).

It is found in the cell membrane. The protein is 13 kDa major membrane protein of Francisella tularensis subsp. holarctica (strain LVS).